A 367-amino-acid chain; its full sequence is MTVMKFDLIKKEGKARRGKITFPRGDIQTPAFMPVGTYGAVKSLSPVELKEMGAEIILGNTFHLWLRPGTEIIKKHGSLHGFNGWDKPILTDSGGFQVFSLGKMRKLTEEGVTFKSPVNSSKVFLSPEISMQVQRDLGSDIVMCFDECTPYPATEKEAKESMELSMRWAKRSKEAHGDNPSALFGIIQGGMYEHLRDESLAKLKEIDFDGFAIGGLSVGEPKEDMIRILDHTAHQMPEDKPRYLMGVGTPKDLVEAVYRGVDMFDCVMPSRNARNGHIFTSEGVIKIRNSKYKDDTSPLDPNCDCYTCKNFTKSYLHHLDKTKEILGSRLNTIHNLTFYQNLMKSIRKALDEGRFSEFRKEFLASYK.

The active-site Proton acceptor is Asp92. Substrate is bound by residues 92–96, Asp146, Gln188, and Gly215; that span reads DSGGF. The tract at residues 246–252 is RNA binding; that stretch reads GVGTPKD. Catalysis depends on Asp265, which acts as the Nucleophile. Positions 303, 305, 308, and 334 each coordinate Zn(2+).

It belongs to the queuine tRNA-ribosyltransferase family. In terms of assembly, homodimer. Within each dimer, one monomer is responsible for RNA recognition and catalysis, while the other monomer binds to the replacement base PreQ1. The cofactor is Zn(2+).

It catalyses the reaction 7-aminomethyl-7-carbaguanine + guanosine(34) in tRNA = 7-aminomethyl-7-carbaguanosine(34) in tRNA + guanine. It functions in the pathway tRNA modification; tRNA-queuosine biosynthesis. Catalyzes the base-exchange of a guanine (G) residue with the queuine precursor 7-aminomethyl-7-deazaguanine (PreQ1) at position 34 (anticodon wobble position) in tRNAs with GU(N) anticodons (tRNA-Asp, -Asn, -His and -Tyr). Catalysis occurs through a double-displacement mechanism. The nucleophile active site attacks the C1' of nucleotide 34 to detach the guanine base from the RNA, forming a covalent enzyme-RNA intermediate. The proton acceptor active site deprotonates the incoming PreQ1, allowing a nucleophilic attack on the C1' of the ribose to form the product. After dissociation, two additional enzymatic reactions on the tRNA convert PreQ1 to queuine (Q), resulting in the hypermodified nucleoside queuosine (7-(((4,5-cis-dihydroxy-2-cyclopenten-1-yl)amino)methyl)-7-deazaguanosine). In Francisella tularensis subsp. holarctica (strain FTNF002-00 / FTA), this protein is Queuine tRNA-ribosyltransferase.